The following is a 92-amino-acid chain: Putative defensin-like protein 251 (92 aa).

The N-terminal stretch at Met1–Ala27 is a signal peptide. Intrachain disulfides connect Cys34–Cys90, Cys45–Cys69, Cys53–Cys82, and Cys67–Cys84.

The protein belongs to the DEFL family.

Its subcellular location is the secreted. In Arabidopsis thaliana (Mouse-ear cress), this protein is Putative defensin-like protein 251 (SCRL12).